The chain runs to 490 residues: Patellin-3 (490 aa).

A compositionally biased stretch (low complexity) spans M1–P17. The interval M1–N121 is disordered. The residue at position 2 (A2) is an N-acetylalanine. Over residues P19 to A33 the composition is skewed to polar residues. Positions E46–T56 are enriched in low complexity. Composition is skewed to basic and acidic residues over residues T57–P69 and S79–S100. S108 is subject to Phosphoserine. A compositionally biased stretch (basic and acidic residues) spans F109–N121. Residue K193 forms a Glycyl lysine isopeptide (Lys-Gly) (interchain with G-Cter in ubiquitin) linkage. Residues E202–C377 enclose the CRAL-TRIO domain. Residues A353–V487 form the GOLD domain.

The protein belongs to the patellin family.

The protein resides in the membrane. The protein localises to the cytoplasm. Its function is as follows. Carrier protein that may be involved in membrane-trafficking events associated with cell plate formation during cytokinesis. Binds to some hydrophobic molecules such as phosphoinositides and promotes their transfer between the different cellular sites. This is Patellin-3 (PATL3) from Arabidopsis thaliana (Mouse-ear cress).